The following is a 73-amino-acid chain: UPF0352 protein APL_0584 (73 aa).

Belongs to the UPF0352 family.

The protein is UPF0352 protein APL_0584 of Actinobacillus pleuropneumoniae serotype 5b (strain L20).